The chain runs to 764 residues: Sesterfisherol synthase (764 aa).

The terpene cyclase stretch occupies residues 2–331; the sequence is EVWEHSRPIA…SPRHHAWRNN (330 aa). Asp95 lines the Mg(2+) pocket. Substrate contacts are provided by residues Asp95, 187–190, Asn231, 235–239, and 324–325; these read RRDD, SFDRE, and RH. Positions 95–99 match the DDXXD 1 motif; the sequence is DDGYE. Positions 231 to 239 match the NSE/DTE motif; sequence NDYWSFDRE. The segment at 332 to 759 is prenyltransferase; it reads SRNGLKPANH…PMLRLLLEKL (428 aa). Residues 347–372 are disordered; it reads LITPSNNLNSSKGSEEQMQDSDNGTR. Residues 348–358 are compositionally biased toward polar residues; that stretch reads ITPSNNLNSSK. Isopentenyl diphosphate-binding residues include Lys476, Arg479, and His508. Residues Asp515 and Asp519 each contribute to the Mg(2+) site. The DDXXD 2 signature appears at 515-519; sequence DDIED. Residue Arg524 participates in dimethylallyl diphosphate binding. Residue Arg525 coordinates isopentenyl diphosphate. 6 residues coordinate dimethylallyl diphosphate: Lys602, Thr603, Gln638, Asn645, Lys655, and Lys665.

This sequence in the N-terminal section; belongs to the terpene synthase family. In the C-terminal section; belongs to the FPP/GGPP synthase family. As to quaternary structure, hexamer. Mg(2+) serves as cofactor.

The catalysed reaction is isopentenyl diphosphate + (2E,6E)-farnesyl diphosphate = (2E,6E,10E)-geranylgeranyl diphosphate + diphosphate. The enzyme catalyses isopentenyl diphosphate + (2E,6E,10E)-geranylgeranyl diphosphate = (2E,6E,10E,14E)-geranylfarnesyl diphosphate + diphosphate. It carries out the reaction (2E,6E,10E,14E)-geranylfarnesyl diphosphate + H2O = sesterfisherol + diphosphate. It functions in the pathway secondary metabolite biosynthesis; terpenoid biosynthesis. Bifunctional terpene synthase; part of the gene cluster that mediates the biosynthesis of sesterfisheric acid. The bifunctional terpene synthase NfSS converts dimethylallyl diphosphate (DMAPP) and isopentenyl diphosphate (IPP) into sesterfisherol. The C-terminal prenyltransferase (PT) domain of NfSS catalyzes formation of geranylfarnesyl pyrophosphate (GFPP), whereas the N-terminal terpene cyclase (TC) domain catalyzes the cyclization of GFPP to sesterfisherol. The cytochrome P450 monooxygenase NfP450 then catalyzes oxidative modifications of sesterfisherol into sesterfisheric acid. The protein is Sesterfisherol synthase of Neosartorya fischeri (strain ATCC 1020 / DSM 3700 / CBS 544.65 / FGSC A1164 / JCM 1740 / NRRL 181 / WB 181) (Aspergillus fischerianus).